The following is a 58-amino-acid chain: Glutathione reductase (58 aa).

The FAD site is built by Glu-5, Thr-12, Cys-13, and Lys-21. Cys-13 and Cys-18 are disulfide-bonded.

This sequence belongs to the class-I pyridine nucleotide-disulfide oxidoreductase family. As to quaternary structure, homodimer. It depends on FAD as a cofactor.

The protein localises to the cytoplasm. The enzyme catalyses 2 glutathione + NADP(+) = glutathione disulfide + NADPH + H(+). Its function is as follows. Catalyzes the reduction of glutathione disulfide (GSSG) to reduced glutathione (GSH). Constitutes the major mechanism to maintain a high GSH:GSSG ratio in the cytosol. The protein is Glutathione reductase of Spirulina sp.